Here is a 200-residue protein sequence, read N- to C-terminus: High mobility group protein 1 homolog (200 aa).

2 DNA-binding regions (HMG box) span residues proline 11 to lysine 81 and proline 100 to lysine 168. Residues glutamate 64–glutamate 86 are compositionally biased toward basic and acidic residues. Disordered regions lie at residues glutamate 64–asparagine 103 and alanine 169–aspartate 200. Over residues serine 190–aspartate 200 the composition is skewed to acidic residues.

The protein belongs to the HMGB family.

The protein resides in the nucleus. It is found in the chromosome. In terms of biological role, binds preferentially single-stranded DNA and unwinds double-stranded DNA. This Strongylocentrotus purpuratus (Purple sea urchin) protein is High mobility group protein 1 homolog (HMG1).